Reading from the N-terminus, the 98-residue chain is Gas vesicle protein A (98 aa).

It belongs to the gas vesicle GvpA family. The gas vesicle shell is 2 nm thick and consists of a single layer of this protein. It forms helical ribs nearly perpendicular to the long axis of the vesicle.

It is found in the gas vesicle shell. Its function is as follows. Gas vesicles are hollow, gas filled proteinaceous nanostructures found in some microorganisms. During planktonic growth they allow positioning of the organism at a favorable depth for light or nutrient acquisition. GvpA forms the protein shell. In Koribacter versatilis (strain Ellin345), this protein is Gas vesicle protein A.